Here is a 364-residue protein sequence, read N- to C-terminus: RNA polymerase sigma factor SigA (364 aa).

Residues 132–202 (LAEANLRLVV…TRAIADQART (71 aa)) form a sigma-70 factor domain-2 region. Positions 156–159 (DLIQ) match the Interaction with polymerase core subunit RpoC motif. The tract at residues 211-287 (ETINKLIRVQ…DDVIESPVDY (77 aa)) is sigma-70 factor domain-3. The segment at 300-353 (VMDTLTDREENVLRMRFGLDDGRMHTLEDVGKQFKVTRERIRQIEAKAIKKLRH) is sigma-70 factor domain-4. Positions 326-345 (LEDVGKQFKVTRERIRQIEA) form a DNA-binding region, H-T-H motif.

It belongs to the sigma-70 factor family. RpoD/SigA subfamily. As to quaternary structure, interacts transiently with the RNA polymerase catalytic core.

It localises to the cytoplasm. Functionally, sigma factors are initiation factors that promote the attachment of RNA polymerase to specific initiation sites and are then released. This sigma factor is the primary sigma factor during exponential growth. This chain is RNA polymerase sigma factor SigA, found in Lactococcus lactis subsp. cremoris (Streptococcus cremoris).